The chain runs to 492 residues: Cytochrome P450 monooxygenase ATEG_03631 (492 aa).

The helical transmembrane segment at 10–30 threads the bilayer; the sequence is FATLNPMVVVAIPVFLFVISL. An N-linked (GlcNAc...) asparagine glycan is attached at Asn-309. Cys-457 contributes to the heme binding site.

The protein belongs to the cytochrome P450 family. Requires heme as cofactor.

It localises to the membrane. It participates in secondary metabolite biosynthesis. Its function is as follows. Cytochrome P450 monooxygenase; part of the cluster A that mediates the biosynthesis of azasperpyranones, members of the azaphilone family that exhibit anti-cancer activities. Azasperpyranones are synthesized by 2 clusters, A and B. Cluster A is responsible for the production of the polyhydric phenol moiety while the azaphilonoid scaffold is produced by the cluster B. The non-reducing polyketide synthase ATEG_03629 produces 5-methyl orsellinic acid, which is then reduced to 5-methyl orsellinic aldehyde by the NRPS-like protein ATEG_03630. 5-methyl orsellinic aldehyde is then first hydroxylated by the FAD-dependent monooxygenase ATEG_03635 and subsequently hydroxylated by the cytochrome P450 monooxygenase ATEG_03631 to produce the unstable polyhydric phenol precursor of azasperpyranones. On the other hand, the polyketide synthase ATEG_07659 is responsible for producing the 3,5-dimethyloctadienone moiety from acetyl-CoA, three malonyl-CoA, and two S-adenosyl methionines (SAM). The 3,5-dimethyloctadienone moiety is then loaded onto the SAT domain of ATEG_07661 and extended with four malonyl-CoA and one SAM, which leads to the formation of 2,4-dihydroxy-6-(5,7-dimethyl-2-oxo-trans-3-trans-5-nonadienyl)-3-methylbenzaldehyde (compound 8) after reductive release and aldol condensation. The FAD-dependent monooxygenase ATEG_07662 is the next enzyme in the biosynthesis sequence and hydroxylates the side chain at the benzylic position of compound 8. In Aspergillus nidulans, afoF, the ortholog of the FAD-dependent oxygenase ATEG_07660, is the key enzyme for the biosynthesis of asperfuranone by catalyzing the hydroxylation at C-8 of to prevent the formation of a six-membered ring hemiacetal intermediate and thus facilitating the formation of a five-membered ring to produce asperfuranone. In Aspergillus terreus, ATEG_07660 is probably not functional, which leads to the formation of the six-membered ring hemiacetal intermediate presperpyranone instead of asperfuranone. Finally, ATEG_03636 is involved in the condensation of the polyhydric phenol moiety produced by cluster A and the perasperpyranone precursor produced by cluster B, to yield azasperpyranone A. Further modifications of azasperpyranone A result in the production of derivatives, including azasperpyranone B to F. The sequence is that of Cytochrome P450 monooxygenase ATEG_03631 from Aspergillus terreus (strain NIH 2624 / FGSC A1156).